The sequence spans 192 residues: Ion-translocating oxidoreductase complex subunit A (192 aa).

6 helical membrane passes run 5-25 (LLLLISTVLVNNFVLVKFLGL), 39-59 (IGMSMATTFVLTLASVLSYLV), 65-85 (LPFELGYLRTMSFILVIAVVV), 102-122 (ALGIYLPLITTNCAVLGVALL), 134-154 (AIYGFGAAVGFSLVLILFSAM), and 171-191 (AIAMITAGLMSLAFMGFTGLV).

Belongs to the NqrDE/RnfAE family. The complex is composed of six subunits: RnfA, RnfB, RnfC, RnfD, RnfE and RnfG.

It is found in the cell inner membrane. Part of a membrane-bound complex that couples electron transfer with translocation of ions across the membrane. The chain is Ion-translocating oxidoreductase complex subunit A from Shewanella sediminis (strain HAW-EB3).